The primary structure comprises 230 residues: Cytidylate kinase (230 aa).

Residue 12–20 participates in ATP binding; the sequence is GPSGAGKGT.

This sequence belongs to the cytidylate kinase family. Type 1 subfamily.

The protein resides in the cytoplasm. The catalysed reaction is CMP + ATP = CDP + ADP. It carries out the reaction dCMP + ATP = dCDP + ADP. The protein is Cytidylate kinase of Shewanella sp. (strain MR-7).